The sequence spans 376 residues: tRNA-aminoacylation cofactor ARC1 (376 aa).

Positions 22 to 46 are interaction with methionyl-tRNA synthetase MES1; sequence KEQSAQAAQWESVLKSGQIQPHLDQ. Interaction with glutamyl-tRNA synthetase GUS1 regions lie at residues 52–61 and 91–121; these read RDNTFIVSTL and TYTTYRHILRWIDYMQNLLEVSSTDKLEINH. Positions 133 to 206 are disordered; the sequence is KKKAPAGGAA…QNKAPEKPKP (74 aa). Over residues 146–180 the composition is skewed to basic and acidic residues; that stretch reads AKADEDVSKKAKKQDHPRGKPDEETLKKLREEAKA. Positions 186-199 are enriched in low complexity; the sequence is KAANAKQQQEQQNK. In terms of domain architecture, tRNA-binding spans 205-307; the sequence is KPSAIDFRVG…KDSKAGDKVF (103 aa).

It belongs to the tRNA-aminoacylation cofactor ARC1 family. In terms of assembly, component of a yeast aminoacyl-tRNA synthase (aaRS) complex formed by methionyl-tRNA synthase MES1, glutamyl-tRNA synthase GUS1 and the tRNA aminoacylation cofactor ARC1 in a stoichiometric complex. Interacts (via N-ter) with MES1 (via N-ter) and GUS1 (via N-ter). Can also form a stable binary complex with either MES1 or GUS1 that is functional in terms of aminoacylation.

It localises to the cytoplasm. Functionally, binds to tRNA and functions as a cofactor for the methionyl-tRNA synthetase (MetRS) and glutamyl-tRNA synthetase (GluRS). Forms a complex with MetRS and GluRS and increases their affinity for cognate tRNAs due to the presence of a tRNA binding domain in its middle and C-terminal part. Binds specifically G4 quadruplex nucleic acid structures (these are four-stranded right-handed helices, stabilized by guanine base quartets). Also required for cytoplasmic confinement of the synthetases and tRNA. The chain is tRNA-aminoacylation cofactor ARC1 (ARC1) from Saccharomyces cerevisiae (strain ATCC 204508 / S288c) (Baker's yeast).